We begin with the raw amino-acid sequence, 194 residues long: Holliday junction branch migration complex subunit RuvA (194 aa).

Residues 1-64 form a domain I region; sequence MIGRLRGILA…EDSVALYGFL (64 aa). Residues 65 to 140 are domain II; sequence REGERRLFRD…RAADFSSGAP (76 aa). The flexible linker stretch occupies residues 140–144; it reads PITGQ. The tract at residues 145–194 is domain III; that stretch reads LGPDAVSEATVALQQLGYKPAEAARMARDAGAEGDEVATVIRKALQAALR.

It belongs to the RuvA family. In terms of assembly, homotetramer. Forms an RuvA(8)-RuvB(12)-Holliday junction (HJ) complex. HJ DNA is sandwiched between 2 RuvA tetramers; dsDNA enters through RuvA and exits via RuvB. An RuvB hexamer assembles on each DNA strand where it exits the tetramer. Each RuvB hexamer is contacted by two RuvA subunits (via domain III) on 2 adjacent RuvB subunits; this complex drives branch migration. In the full resolvosome a probable DNA-RuvA(4)-RuvB(12)-RuvC(2) complex forms which resolves the HJ.

It is found in the cytoplasm. Functionally, the RuvA-RuvB-RuvC complex processes Holliday junction (HJ) DNA during genetic recombination and DNA repair, while the RuvA-RuvB complex plays an important role in the rescue of blocked DNA replication forks via replication fork reversal (RFR). RuvA specifically binds to HJ cruciform DNA, conferring on it an open structure. The RuvB hexamer acts as an ATP-dependent pump, pulling dsDNA into and through the RuvAB complex. HJ branch migration allows RuvC to scan DNA until it finds its consensus sequence, where it cleaves and resolves the cruciform DNA. In Xanthomonas euvesicatoria pv. vesicatoria (strain 85-10) (Xanthomonas campestris pv. vesicatoria), this protein is Holliday junction branch migration complex subunit RuvA.